A 442-amino-acid polypeptide reads, in one-letter code: D-serine dehydratase (442 aa).

Position 118 is an N6-(pyridoxal phosphate)lysine (Lys-118).

Belongs to the serine/threonine dehydratase family. DsdA subfamily. In terms of assembly, monomer. The cofactor is pyridoxal 5'-phosphate.

It carries out the reaction D-serine = pyruvate + NH4(+). The polypeptide is D-serine dehydratase (Escherichia coli O139:H28 (strain E24377A / ETEC)).